A 111-amino-acid polypeptide reads, in one-letter code: Small ribosomal subunit protein bS16 (111 aa).

The interval 92–111 (MEVKAKNRKARPSKKEDKEA) is disordered.

It belongs to the bacterial ribosomal protein bS16 family.

In Rickettsia massiliae (strain Mtu5), this protein is Small ribosomal subunit protein bS16.